The chain runs to 806 residues: Glycerol-3-phosphate acyltransferase (806 aa).

An HXXXXD motif motif is present at residues 305–310; the sequence is CHRSHM.

The protein belongs to the GPAT/DAPAT family.

It localises to the cell inner membrane. The enzyme catalyses sn-glycerol 3-phosphate + an acyl-CoA = a 1-acyl-sn-glycero-3-phosphate + CoA. The protein operates within phospholipid metabolism; CDP-diacylglycerol biosynthesis; CDP-diacylglycerol from sn-glycerol 3-phosphate: step 1/3. In Enterobacter sp. (strain 638), this protein is Glycerol-3-phosphate acyltransferase.